The primary structure comprises 448 residues: Bifunctional protein GlmU (448 aa).

The pyrophosphorylase stretch occupies residues 1–229 (MNNHTLNIII…NDEIQGINNL (229 aa)). UDP-N-acetyl-alpha-D-glucosamine contacts are provided by residues 11-14 (LAAG), lysine 25, glutamine 76, 81-82 (GT), 103-105 (YGD), glycine 140, glutamate 154, asparagine 169, and asparagine 227. Residue aspartate 105 participates in Mg(2+) binding. A Mg(2+)-binding site is contributed by asparagine 227. The linker stretch occupies residues 230–250 (LQLVRAEKIYQKQQAKLLLLS). The segment at 251-448 (GIMIYNPSNF…NEKKQIHKKL (198 aa)) is N-acetyltransferase. Lysine 351 serves as a coordination point for UDP-N-acetyl-alpha-D-glucosamine. Histidine 363 acts as the Proton acceptor in catalysis. Tyrosine 366 and asparagine 377 together coordinate UDP-N-acetyl-alpha-D-glucosamine. Acetyl-CoA contacts are provided by residues alanine 380, 386-387 (NY), serine 405, and alanine 423.

It in the N-terminal section; belongs to the N-acetylglucosamine-1-phosphate uridyltransferase family. The protein in the C-terminal section; belongs to the transferase hexapeptide repeat family. Homotrimer. Mg(2+) is required as a cofactor.

It localises to the cytoplasm. The enzyme catalyses alpha-D-glucosamine 1-phosphate + acetyl-CoA = N-acetyl-alpha-D-glucosamine 1-phosphate + CoA + H(+). It carries out the reaction N-acetyl-alpha-D-glucosamine 1-phosphate + UTP + H(+) = UDP-N-acetyl-alpha-D-glucosamine + diphosphate. It functions in the pathway nucleotide-sugar biosynthesis; UDP-N-acetyl-alpha-D-glucosamine biosynthesis; N-acetyl-alpha-D-glucosamine 1-phosphate from alpha-D-glucosamine 6-phosphate (route II): step 2/2. Its pathway is nucleotide-sugar biosynthesis; UDP-N-acetyl-alpha-D-glucosamine biosynthesis; UDP-N-acetyl-alpha-D-glucosamine from N-acetyl-alpha-D-glucosamine 1-phosphate: step 1/1. The protein operates within bacterial outer membrane biogenesis; LPS lipid A biosynthesis. Catalyzes the last two sequential reactions in the de novo biosynthetic pathway for UDP-N-acetylglucosamine (UDP-GlcNAc). The C-terminal domain catalyzes the transfer of acetyl group from acetyl coenzyme A to glucosamine-1-phosphate (GlcN-1-P) to produce N-acetylglucosamine-1-phosphate (GlcNAc-1-P), which is converted into UDP-GlcNAc by the transfer of uridine 5-monophosphate (from uridine 5-triphosphate), a reaction catalyzed by the N-terminal domain. This Buchnera aphidicola subsp. Baizongia pistaciae (strain Bp) protein is Bifunctional protein GlmU.